The primary structure comprises 179 residues: Large ribosomal subunit protein uL6 (179 aa).

It belongs to the universal ribosomal protein uL6 family. As to quaternary structure, part of the 50S ribosomal subunit.

In terms of biological role, this protein binds to the 23S rRNA, and is important in its secondary structure. It is located near the subunit interface in the base of the L7/L12 stalk, and near the tRNA binding site of the peptidyltransferase center. The polypeptide is Large ribosomal subunit protein uL6 (Prochlorococcus marinus (strain MIT 9515)).